The following is a 360-amino-acid chain: Photosystem II protein D1 1 (360 aa).

3 helical membrane-spanning segments follow: residues 29–46 (YVGW…AATV), 118–133 (HFLI…QWEL), and 142–156 (WICV…SATA). A chlorophyll a-binding site is contributed by His-118. Tyr-126 is a binding site for pheophytin a. 2 residues coordinate [CaMn4O5] cluster: Asp-170 and Glu-189. Residues 197–218 (FHMLGVAGVFGGSLFSAMHGSL) traverse the membrane as a helical segment. Chlorophyll a is bound at residue His-198. Residues His-215 and 264-265 (SF) each bind a quinone. Residue His-215 participates in Fe cation binding. His-272 contributes to the Fe cation binding site. Residues 274–288 (FLAAWPVIGIWFTAL) form a helical membrane-spanning segment. [CaMn4O5] cluster-binding residues include His-332, Glu-333, Asp-342, and Ala-344. A propeptide spanning residues 345 to 360 (AGEVAPVALTAPAING) is cleaved from the precursor.

It belongs to the reaction center PufL/M/PsbA/D family. PSII is composed of 1 copy each of membrane proteins PsbA, PsbB, PsbC, PsbD, PsbE, PsbF, PsbH, PsbI, PsbJ, PsbK, PsbL, PsbM, PsbT, PsbX, PsbY, PsbZ, Psb30/Ycf12, peripheral proteins PsbO, CyanoQ (PsbQ), PsbU, PsbV and a large number of cofactors. It forms dimeric complexes. Requires The D1/D2 heterodimer binds P680, chlorophylls that are the primary electron donor of PSII, and subsequent electron acceptors. It shares a non-heme iron and each subunit binds pheophytin, quinone, additional chlorophylls, carotenoids and lipids. D1 provides most of the ligands for the Mn4-Ca-O5 cluster of the oxygen-evolving complex (OEC). There is also a Cl(-1) ion associated with D1 and D2, which is required for oxygen evolution. The PSII complex binds additional chlorophylls, carotenoids and specific lipids. as cofactor. Tyr-161 forms a radical intermediate that is referred to as redox-active TyrZ, YZ or Y-Z. Post-translationally, C-terminally processed by CtpA; processing is essential to allow assembly of the oxygen-evolving complex and thus photosynthetic growth.

It is found in the cellular thylakoid membrane. The catalysed reaction is 2 a plastoquinone + 4 hnu + 2 H2O = 2 a plastoquinol + O2. In terms of biological role, photosystem II (PSII) is a light-driven water:plastoquinone oxidoreductase that uses light energy to abstract electrons from H(2)O, generating O(2) and a proton gradient subsequently used for ATP formation. It consists of a core antenna complex that captures photons, and an electron transfer chain that converts photonic excitation into a charge separation. The D1/D2 (PsbA/PsbD) reaction center heterodimer binds P680, the primary electron donor of PSII as well as several subsequent electron acceptors. This chain is Photosystem II protein D1 1, found in Nostoc sp. (strain PCC 7120 / SAG 25.82 / UTEX 2576).